The sequence spans 72 residues: Translation initiation factor IF-1 1 (72 aa).

The S1-like domain occupies 1 to 72; sequence MSKEDVIQMQ…TKGRIVFRAK (72 aa).

This sequence belongs to the IF-1 family. As to quaternary structure, component of the 30S ribosomal translation pre-initiation complex which assembles on the 30S ribosome in the order IF-2 and IF-3, IF-1 and N-formylmethionyl-tRNA(fMet); mRNA recruitment can occur at any time during PIC assembly.

It localises to the cytoplasm. One of the essential components for the initiation of protein synthesis. Stabilizes the binding of IF-2 and IF-3 on the 30S subunit to which N-formylmethionyl-tRNA(fMet) subsequently binds. Helps modulate mRNA selection, yielding the 30S pre-initiation complex (PIC). Upon addition of the 50S ribosomal subunit IF-1, IF-2 and IF-3 are released leaving the mature 70S translation initiation complex. This chain is Translation initiation factor IF-1 1, found in Thiobacillus denitrificans (strain ATCC 25259 / T1).